The sequence spans 59 residues: Large ribosomal subunit protein uL30 (59 aa).

This sequence belongs to the universal ribosomal protein uL30 family. As to quaternary structure, part of the 50S ribosomal subunit.

The polypeptide is Large ribosomal subunit protein uL30 (Staphylococcus epidermidis (strain ATCC 12228 / FDA PCI 1200)).